The following is a 192-amino-acid chain: Putative B3 domain-containing protein At4g03160 (192 aa).

Positions 22–44 (VFFDQEEEEEDEEEEYDEESVCE) are disordered. A compositionally biased stretch (acidic residues) spans 25–44 (DQEEEEEDEEEEYDEESVCE). Positions 75-173 (KDNQYRLMLG…EICFAIDSTR (99 aa)) form a DNA-binding region, TF-B3.

It localises to the nucleus. This Arabidopsis thaliana (Mouse-ear cress) protein is Putative B3 domain-containing protein At4g03160.